A 167-amino-acid chain; its full sequence is Small ribosomal subunit protein uS9 (167 aa).

The interval 136–167 is disordered; sequence KRAGFLTRDPRATERKKYGLKKARKAPQYSKR. Over residues 143–152 the composition is skewed to basic and acidic residues; that stretch reads RDPRATERKK. Over residues 153 to 167 the composition is skewed to basic residues; the sequence is YGLKKARKAPQYSKR.

This sequence belongs to the universal ribosomal protein uS9 family.

This chain is Small ribosomal subunit protein uS9, found in Nocardia farcinica (strain IFM 10152).